The sequence spans 581 residues: Solute carrier family 15 member 3 (581 aa).

The span at 1–14 (MPAPRAREQPRVPG) shows a compositional bias: basic and acidic residues. Residues 1–26 (MPAPRAREQPRVPGERQPLLPRGARG) form a disordered region. A helical membrane pass occupies residues 38-58 (VLLVEMLERAAFFGVTANLVL). Residues asparagine 61 and asparagine 66 are each glycosylated (N-linked (GlcNAc...) asparagine). Transmembrane regions (helical) follow at residues 76 to 96 (ALVF…LADV), 103 to 123 (AVAL…ATAF), and 155 to 175 (PYCA…ASSV). Asparagine 178 carries N-linked (GlcNAc...) asparagine glycosylation. The helical transmembrane segment at 200–220 (NWFYWSINLGAVLSLLVVAFI) threads the bilayer. Residue asparagine 223 is glycosylated (N-linked (GlcNAc...) asparagine). A run of 2 helical transmembrane segments spans residues 232 to 252 (IPVG…PVFI) and 310 to 330 (FQVL…WMVY). The N-linked (GlcNAc...) asparagine glycan is linked to asparagine 356. Helical transmembrane passes span 369-389 (TIPE…LVPL) and 411-431 (MALG…LEME). N-linked (GlcNAc...) asparagine glycosylation occurs at asparagine 439. The next 3 helical transmembrane spans lie at 458 to 478 (IWWQ…ASIP), 497 to 517 (GIFF…VALL), and 540 to 560 (LYFF…VWIA).

The protein belongs to the major facilitator superfamily. Proton-dependent oligopeptide transporter (POT/PTR) (TC 2.A.17) family.

The protein resides in the lysosome membrane. It is found in the endosome membrane. It carries out the reaction glycylglycylglycine(out) + n H(+)(out) = glycylglycylglycine(in) + n H(+)(in). The enzyme catalyses carnosine(out) + n H(+)(out) = carnosine(in) + n H(+)(in). The catalysed reaction is L-histidine(out) + n H(+)(out) = L-histidine(in) + n H(+)(in). It catalyses the reaction N-acetyl-D-muramoyl-L-alanyl-D-isoglutamine(out) + n H(+)(out) = N-acetyl-D-muramoyl-L-alanyl-D-isoglutamine(in) + n H(+)(in). Its function is as follows. Proton-coupled amino-acid transporter that transports free histidine and certain di- and tripeptides, and is involved in innate immune response. Also able to transport carnosine. Involved in the detection of microbial pathogens by toll-like receptors (TLRs) and NOD-like receptors (NLRs), probably by mediating transport of bacterial peptidoglycans across the endolysosomal membrane: catalyzes the transport of certain bacterial peptidoglycans, such as muramyl dipeptide (MDP), the NOD2 ligand. In Homo sapiens (Human), this protein is Solute carrier family 15 member 3.